Consider the following 943-residue polypeptide: Isoleucine--tRNA ligase (943 aa).

The 'HIGH' region signature appears at 58-68; it reads PYANGKIHIGH. An L-isoleucyl-5'-AMP-binding site is contributed by Glu-567. Residues 608–612 carry the 'KMSKS' region motif; it reads KMSKS. Lys-611 contributes to the ATP binding site. The Zn(2+) site is built by Cys-906, Cys-909, Cys-926, and Cys-929.

It belongs to the class-I aminoacyl-tRNA synthetase family. IleS type 1 subfamily. Monomer. Requires Zn(2+) as cofactor.

It is found in the cytoplasm. It catalyses the reaction tRNA(Ile) + L-isoleucine + ATP = L-isoleucyl-tRNA(Ile) + AMP + diphosphate. Functionally, catalyzes the attachment of isoleucine to tRNA(Ile). As IleRS can inadvertently accommodate and process structurally similar amino acids such as valine, to avoid such errors it has two additional distinct tRNA(Ile)-dependent editing activities. One activity is designated as 'pretransfer' editing and involves the hydrolysis of activated Val-AMP. The other activity is designated 'posttransfer' editing and involves deacylation of mischarged Val-tRNA(Ile). The protein is Isoleucine--tRNA ligase of Pseudomonas entomophila (strain L48).